Reading from the N-terminus, the 138-residue chain is MSDNQICDISNEVLEELKKFRFSKSKNNAALILKVDREKQTVVLDEFIDDISVDELQDTLPGHQPRYVIYTYKMVHDDQRISYPMCFIFYTPRDSQIELQMMYACTKSALQREVDLTRVYEIRELDELTEEWLKAKLK.

The 136-residue stretch at 3–138 folds into the ADF-H domain; sequence DNQICDISNE…TEEWLKAKLK (136 aa).

It belongs to the actin-binding proteins ADF family. GMF subfamily. In terms of tissue distribution, in ovaries, expressed in follicular epithelium, in polar cells, migrating border cells, and centripedal cells (at protein level).

Its subcellular location is the cell projection. It localises to the lamellipodium. The protein resides in the cytoplasm. It is found in the perinuclear region. The protein localises to the nucleus. Its subcellular location is the cell cortex. Inhibits Arp2/3-mediated actin nucleation. Together with flr, promotes Arp2/3-nucleated actin filament array disassembly. Promotes debranching. Regulates lamellipodial protrusion dynamics possibly by facilitating lamellipodial retraction. In egg chambers, enhances the retraction dynamics of cellular extensions in border cells and thus together with flr plays an important role in directional migration of border cell clusters. The chain is Glia maturation factor from Drosophila melanogaster (Fruit fly).